Here is a 153-residue protein sequence, read N- to C-terminus: 3-hydroxyacyl-[acyl-carrier-protein] dehydratase FabZ (153 aa).

The active site involves histidine 57.

The protein belongs to the thioester dehydratase family. FabZ subfamily.

The protein localises to the cytoplasm. It catalyses the reaction a (3R)-hydroxyacyl-[ACP] = a (2E)-enoyl-[ACP] + H2O. Functionally, involved in unsaturated fatty acids biosynthesis. Catalyzes the dehydration of short chain beta-hydroxyacyl-ACPs and long chain saturated and unsaturated beta-hydroxyacyl-ACPs. This is 3-hydroxyacyl-[acyl-carrier-protein] dehydratase FabZ from Aeromonas hydrophila subsp. hydrophila (strain ATCC 7966 / DSM 30187 / BCRC 13018 / CCUG 14551 / JCM 1027 / KCTC 2358 / NCIMB 9240 / NCTC 8049).